A 112-amino-acid polypeptide reads, in one-letter code: uncharacterized protein (112 aa).

A signal peptide spans 1–21 (MKTLFTSVVLCGALVVSSSFA). 2 HhH domains span residues 49–79 (DKLN…IVQY) and 80–109 (REKH…NRDR).

This is an uncharacterized protein from Haemophilus influenzae (strain ATCC 51907 / DSM 11121 / KW20 / Rd).